The primary structure comprises 1099 residues: Solute carrier family 38 member 10 (1099 aa).

10 helical membrane passes run 9 to 31 (WGLV…PFCF), 36 to 58 (IVLG…MFLV), 84 to 104 (LVET…YVVI), 123 to 143 (TFRV…LSLQ), 153 to 173 (FSAM…LSSF), 229 to 249 (IFAS…FFGY), 272 to 292 (MIRV…ILPC), 323 to 343 (VLTL…PNVE), 345 to 365 (ILGF…PALI), and 378 to 398 (VVLW…LSVS). 2 disordered regions span residues 440-679 (DSQE…EEAG) and 720-1047 (EIRQ…LAPK). Residue Ser-441 is modified to Phosphoserine. 5 stretches are compositionally biased toward basic and acidic residues: residues 441 to 454 (SQEK…KEVL), 493 to 508 (EAHR…KVVV), 517 to 528 (PEEKKPPPKLPD), 544 to 561 (ESEK…KRPE), and 586 to 599 (PRKE…RDLH). Residues Ser-607 and Ser-635 each carry the phosphoserine modification. Basic and acidic residues-rich tracts occupy residues 653 to 663 (EAAEQREKNEA), 720 to 735 (EIRQ…KPKP), and 749 to 766 (GQEE…HAGE). Residues 698–734 (VQQKRLLDQQEKLLAVIEEQHKEIRQQRQEGEEDKPK) are a coiled coil. Position 767 is a phosphothreonine (Thr-767). 5 stretches are compositionally biased toward basic and acidic residues: residues 793–802 (KGQHPLEEVK), 852–894 (EPVH…ETGK), 917–928 (EDSHSKSRHSEP), 957–969 (KSQD…RSEG), and 1010–1022 (QKPE…RDLK). Ser-886 carries the phosphoserine modification.

The protein belongs to the amino acid/polyamine transporter 2 family. As to expression, only expressed in the pituitary, adrenal gland, stomach and in the upper gastrointestinal tract.

It is found in the membrane. The enzyme catalyses L-glutamate(out) = L-glutamate(in). The catalysed reaction is L-glutamine(out) = L-glutamine(in). It carries out the reaction L-alanine(in) = L-alanine(out). It catalyses the reaction L-serine(in) = L-serine(out). The enzyme catalyses L-leucine(in) = L-leucine(out). Its function is as follows. Facilitates bidirectional transport of amino acids. May act as a glutamate sensor that regulates glutamate-glutamine cycle and mTOR signaling in the brain. The transport mechanism remains to be elucidated. This chain is Solute carrier family 38 member 10, found in Rattus norvegicus (Rat).